The following is a 421-amino-acid chain: Forkhead box protein J1 (421 aa).

2 disordered regions span residues 1 to 32 (MAESWLRLCGAGPGEEAGPEGGMEEPDALDDS) and 77 to 110 (ADPACLGQPHTPGKPTSSCTSRSAPPGLQAPPPD). Gly residues predominate over residues 11–21 (AGPGEEAGPEG). Residues 90 to 99 (KPTSSCTSRS) are compositionally biased toward polar residues. The fork-head DNA-binding region spans 120 to 210 (VKPPYSYATL…YAERLLSGAF (91 aa)).

The protein belongs to the FOXJ1 family. Predominantly expressed in tissues containing motile cilia.

The protein resides in the nucleus. Transcription factor specifically required for the formation of motile cilia. Acts by activating transcription of genes that mediate assembly of motile cilia, such as CFAP157. Binds the DNA consensus sequences 5'-HWDTGTTTGTTTA-3' or 5'-KTTTGTTGTTKTW-3' (where H is not G, W is A or T, D is not C, and K is G or T). Activates the transcription of a variety of ciliary proteins in the developing brain and lung. This chain is Forkhead box protein J1, found in Mus musculus (Mouse).